The following is a 189-amino-acid chain: Large ribosomal subunit protein uL5 (189 aa).

It belongs to the universal ribosomal protein uL5 family. As to quaternary structure, part of the 50S ribosomal subunit; part of the 5S rRNA/L5/L18/L25 subcomplex. Contacts the 5S rRNA and the P site tRNA. Forms a bridge to the 30S subunit in the 70S ribosome.

Functionally, this is one of the proteins that bind and probably mediate the attachment of the 5S RNA into the large ribosomal subunit, where it forms part of the central protuberance. In the 70S ribosome it contacts protein S13 of the 30S subunit (bridge B1b), connecting the 2 subunits; this bridge is implicated in subunit movement. Contacts the P site tRNA; the 5S rRNA and some of its associated proteins might help stabilize positioning of ribosome-bound tRNAs. The chain is Large ribosomal subunit protein uL5 from Corynebacterium jeikeium (strain K411).